Reading from the N-terminus, the 274-residue chain is Large ribosomal subunit protein uL2cz/uL2cy (274 aa).

Disordered stretches follow at residues 1–23 and 224–274; these read MAIH…SQVK and NPVD…RRSK.

The protein belongs to the universal ribosomal protein uL2 family. Part of the 50S ribosomal subunit.

It localises to the plastid. The protein localises to the chloroplast. The polypeptide is Large ribosomal subunit protein uL2cz/uL2cy (rpl2-A) (Vitis vinifera (Grape)).